The following is a 329-amino-acid chain: Large ribosomal subunit protein uL3 (329 aa).

The protein belongs to the universal ribosomal protein uL3 family. In terms of assembly, part of the 50S ribosomal subunit. Forms a cluster with proteins L14 and L24e.

In terms of biological role, one of the primary rRNA binding proteins, it binds directly near the 3'-end of the 23S rRNA, where it nucleates assembly of the 50S subunit. This is Large ribosomal subunit protein uL3 from Picrophilus torridus (strain ATCC 700027 / DSM 9790 / JCM 10055 / NBRC 100828 / KAW 2/3).